A 458-amino-acid polypeptide reads, in one-letter code: Argininosuccinate lyase (458 aa).

It belongs to the lyase 1 family. Argininosuccinate lyase subfamily.

It is found in the cytoplasm. The catalysed reaction is 2-(N(omega)-L-arginino)succinate = fumarate + L-arginine. It participates in amino-acid biosynthesis; L-arginine biosynthesis; L-arginine from L-ornithine and carbamoyl phosphate: step 3/3. In Buchnera aphidicola subsp. Baizongia pistaciae (strain Bp), this protein is Argininosuccinate lyase.